The chain runs to 121 residues: Small ribosomal subunit protein uS13 (121 aa).

The tract at residues 94-121 is disordered; that stretch reads GLPVRGQNTKNNARTRKGPRRTVANKKK. Residues 106–121 show a composition bias toward basic residues; that stretch reads ARTRKGPRRTVANKKK.

This sequence belongs to the universal ribosomal protein uS13 family. In terms of assembly, part of the 30S ribosomal subunit. Forms a loose heterodimer with protein S19. Forms two bridges to the 50S subunit in the 70S ribosome.

Located at the top of the head of the 30S subunit, it contacts several helices of the 16S rRNA. In the 70S ribosome it contacts the 23S rRNA (bridge B1a) and protein L5 of the 50S subunit (bridge B1b), connecting the 2 subunits; these bridges are implicated in subunit movement. Contacts the tRNAs in the A and P-sites. The sequence is that of Small ribosomal subunit protein uS13 from Geobacillus sp. (strain WCH70).